Here is a 283-residue protein sequence, read N- to C-terminus: Shikimate dehydrogenase (NADP(+)) (283 aa).

Residues 19 to 21 and threonine 66 contribute to the shikimate site; that span reads SRS. Residue lysine 70 is the Proton acceptor of the active site. Glutamate 82 is an NADP(+) binding site. The shikimate site is built by asparagine 91 and aspartate 107. NADP(+) contacts are provided by residues 133–137 and isoleucine 226; that span reads GAGGA. Tyrosine 228 lines the shikimate pocket. Glycine 249 contacts NADP(+).

It belongs to the shikimate dehydrogenase family. Homodimer.

The catalysed reaction is shikimate + NADP(+) = 3-dehydroshikimate + NADPH + H(+). It participates in metabolic intermediate biosynthesis; chorismate biosynthesis; chorismate from D-erythrose 4-phosphate and phosphoenolpyruvate: step 4/7. In terms of biological role, involved in the biosynthesis of the chorismate, which leads to the biosynthesis of aromatic amino acids. Catalyzes the reversible NADPH linked reduction of 3-dehydroshikimate (DHSA) to yield shikimate (SA). In Rhodospirillum rubrum (strain ATCC 11170 / ATH 1.1.1 / DSM 467 / LMG 4362 / NCIMB 8255 / S1), this protein is Shikimate dehydrogenase (NADP(+)).